Reading from the N-terminus, the 244-residue chain is 1-(5-phosphoribosyl)-5-[(5-phosphoribosylamino)methylideneamino] imidazole-4-carboxamide isomerase (244 aa).

Asp8 (proton acceptor) is an active-site residue. The active-site Proton donor is the Asp129.

The protein belongs to the HisA/HisF family.

The protein localises to the cytoplasm. The enzyme catalyses 1-(5-phospho-beta-D-ribosyl)-5-[(5-phospho-beta-D-ribosylamino)methylideneamino]imidazole-4-carboxamide = 5-[(5-phospho-1-deoxy-D-ribulos-1-ylimino)methylamino]-1-(5-phospho-beta-D-ribosyl)imidazole-4-carboxamide. The protein operates within amino-acid biosynthesis; L-histidine biosynthesis; L-histidine from 5-phospho-alpha-D-ribose 1-diphosphate: step 4/9. The sequence is that of 1-(5-phosphoribosyl)-5-[(5-phosphoribosylamino)methylideneamino] imidazole-4-carboxamide isomerase from Chelativorans sp. (strain BNC1).